The sequence spans 113 residues: uncharacterized protein (113 aa).

A mitochondrion-targeting transit peptide spans 1–14; it reads MATRNALRIVSRRF. The interval 41-79 is disordered; the sequence is QKLARQGPGEQAAGSASEAKVAGATASASAESGPKVSED. Residues 55-73 show a composition bias toward low complexity; the sequence is SASEAKVAGATASASAESG.

It localises to the mitochondrion. This is an uncharacterized protein from Arabidopsis thaliana (Mouse-ear cress).